The following is a 494-amino-acid chain: Succinoglycan biosynthesis transport protein ExoT (494 aa).

The next 13 membrane-spanning stretches (helical) occupy residues 16–36, 44–64, 82–102, 105–125, 157–177, 215–235, 253–273, 297–317, 321–341, 343–363, 384–404, 421–441, and 447–467; these read WSVLSKTGTFGLKFVTVPILA, FGAVAVALTVVQFLAMIGGAG, SVFWANLAIALMMALGLFVFA, LATLLGAPEAAYLLRIMSLLI, LGAVIAVLLALLGFGIWSLLA, FGMMGSEIANFITFQSPMVVI, FASIPNQVVLSAVMGVLFPTF, LLAPMMFGLWALAEPAMLVLF, WAYAWPVLGLLALSKGILTPC, TFIPYLKGVGQGAVLFWWALI, AMIWLCIVNAVTLVGYSWVVF, PMIAALLMALVVRFLLEHFGA, and VLQLIAGTAIGSVIYTVLILL.

It belongs to the polysaccharide synthase family.

The protein resides in the cell membrane. It functions in the pathway glycan metabolism; exopolysaccharide biosynthesis. This Rhizobium meliloti (strain 1021) (Ensifer meliloti) protein is Succinoglycan biosynthesis transport protein ExoT (exoT).